Reading from the N-terminus, the 300-residue chain is D-alanine--D-alanine ligase (300 aa).

Residues 99–293 (KKILKYANIN…FAELLNSIVK (195 aa)) enclose the ATP-grasp domain. 126 to 181 (IEKIGYPVFVKPNSGGSSVATNLVKDKEGIKEAVELALKYDKEVMIENYTKGEEIT) serves as a coordination point for ATP. D248, E260, and N262 together coordinate Mg(2+).

This sequence belongs to the D-alanine--D-alanine ligase family. Mg(2+) is required as a cofactor. Mn(2+) serves as cofactor.

The protein resides in the cytoplasm. The enzyme catalyses 2 D-alanine + ATP = D-alanyl-D-alanine + ADP + phosphate + H(+). It functions in the pathway cell wall biogenesis; peptidoglycan biosynthesis. Functionally, cell wall formation. The polypeptide is D-alanine--D-alanine ligase (Clostridium botulinum (strain ATCC 19397 / Type A)).